The sequence spans 302 residues: MKAPGRLVLIILCSVVFSAVYILLCCWAGLPLCLATCLDHHFPTGSRPTVPGPLHFSGYSSVPDGKPLVREPCRSCAVVSSSGQMLGSGLGAEIDSAECVFRMNQAPTVGFEADVGQRSTLRVVSHTSVPLLLRNYSHYFQKARDTLYMVWGQGRHMDRVLGGRTYRTLLQLTRMYPGLQVYTFTERMMAYCDQIFQDETGKNRRQSGSFLSTGWFTMILALELCEEIVVYGMVSDSYCREKSHPSVPYHYFEKGRLDECQMYLAHEQAPRSAHRFITEKAVFSRWAKKRPIVFAHPSWRTE.

The Cytoplasmic segment spans residues Met-1–Arg-6. Residues Leu-7 to Trp-27 traverse the membrane as a helical; Signal-anchor for type II membrane protein segment. Residues Ala-28 to Glu-302 lie on the Lumenal side of the membrane. Cys-76 and Cys-225 are oxidised to a cystine. Asn-135 carries N-linked (GlcNAc...) asparagine glycosylation.

The protein belongs to the glycosyltransferase 29 family. In terms of tissue distribution, ubiquitous.

The protein resides in the golgi apparatus membrane. It catalyses the reaction an alpha-Neu5Ac-(2-&gt;3)-beta-D-Gal-(1-&gt;3)-D-GlcNAc derivative + CMP-N-acetyl-beta-neuraminate = an alpha-Neu5Ac-(2-&gt;3)-beta-D-Gal-(1-&gt;3)-[alpha-Neu5Ac-(2-&gt;6)]-D-GlcNAc derivative + CMP + H(+). The catalysed reaction is N-acetyl-alpha-neuraminosyl-(2-&gt;3)-beta-D-galactosyl-(1-&gt;3)-N-acetyl-D-galactosamine + CMP-N-acetyl-beta-neuraminate = N-acetyl-alpha-neuraminosyl-(2-&gt;3)-beta-D-galactosyl-(1-&gt;3)-[N-acetyl-alpha-neuraminosyl-(2-&gt;6)]-N-acetyl-D-galactosamine + CMP + H(+). It carries out the reaction a ganglioside GM1b (d18:1(4E)) + CMP-N-acetyl-beta-neuraminate = a ganglioside GD1alpha (d18:1(4E)) + CMP + H(+). The enzyme catalyses 3-O-[alpha-Neu5Ac-(2-&gt;3)-beta-D-Gal-(1-&gt;3)-alpha-D-GalNAc]-L-Ser-[protein] + CMP-N-acetyl-beta-neuraminate = a 3-O-{alpha-Neu5Ac-(2-&gt;3)-beta-D-Gal-(1-&gt;3)-[alpha-Neu5Ac-(2-&gt;6)]-alpha-D-GalNAc}-L-seryl-[protein] + CMP + H(+). It catalyses the reaction 3-O-[alpha-Neu5Ac-(2-&gt;3)-beta-D-Gal-(1-&gt;3)-alpha-D-GalNAc]-L-Thr-[protein] + CMP-N-acetyl-beta-neuraminate = a 3-O-{alpha-Neu5Ac-(2-&gt;3)-beta-D-Gal-(1-&gt;3)-[alpha-Neu5Ac-(2-&gt;6)]-alpha-D-GalNAc}-L-threonyl-[protein] + CMP + H(+). The protein operates within protein modification; protein glycosylation. Its pathway is glycolipid biosynthesis. In terms of biological role, transfers the sialyl group (N-acetyl-alpha-neuraminyl or NeuAc) from CMP-NeuAc to the GalNAc residue on the NeuAc-alpha-2,3-Gal-beta-1,3-GalNAc sequence of glycoproteins and glycolipids forming an alpha-2,6-linkage. Produces branched type disialyl structures by transfer of a sialyl group onto a GalNAc residue inside the backbone core chains. Prefers O-glycans to glycoproteins or glycolipids. The chain is Alpha-N-acetyl-neuraminyl-2,3-beta-galactosyl-1,3-N-acetyl-galactosaminide alpha-2,6-sialyltransferase (ST6GALNAC4) from Homo sapiens (Human).